Here is a 103-residue protein sequence, read N- to C-terminus: MSKQKIRIRLKAFDYKLIDQSAAEIVDTAKRTGAIVKGPVPLPTRMKRFDILRSPHVNKTSRDQFEIRTHQRLMDIVDPTDKTVDALMKLDLPAGVDVEIKLQ.

The protein belongs to the universal ribosomal protein uS10 family. As to quaternary structure, part of the 30S ribosomal subunit.

Involved in the binding of tRNA to the ribosomes. This chain is Small ribosomal subunit protein uS10, found in Acidovorax sp. (strain JS42).